Reading from the N-terminus, the 183-residue chain is Tumor necrosis factor ligand superfamily member 4 (183 aa).

Residues 1 to 23 (MERVQPLEENVGNAARPRFERNK) lie on the Cytoplasmic side of the membrane. The helical; Signal-anchor for type II membrane protein transmembrane segment at 24 to 50 (LLLVASVIQGLGLLLCFTYICLHFSAL) threads the bilayer. The 123-residue stretch at 51 to 173 (QVSHRYPRIQ…HVNGGELILI (123 aa)) folds into the THD domain. Topologically, residues 51–183 (QVSHRYPRIQ…HQNPGEFCVL (133 aa)) are extracellular. 4 N-linked (GlcNAc...) asparagine glycosylation sites follow: asparagine 90, asparagine 114, asparagine 152, and asparagine 157. A disulfide bond links cysteine 97 and cysteine 181.

The protein belongs to the tumor necrosis factor family. As to quaternary structure, homotrimer.

Its subcellular location is the membrane. In terms of biological role, cytokine that binds to TNFRSF4. Co-stimulates T-cell proliferation and cytokine production. The chain is Tumor necrosis factor ligand superfamily member 4 (TNFSF4) from Homo sapiens (Human).